We begin with the raw amino-acid sequence, 146 residues long: Late protein OPG112 (146 aa).

The helical transmembrane segment at 10–32 (LAMTAFFGELSTLDIMALIMSIF) threads the bilayer.

The protein belongs to the orthopoxvirus OPG112 family.

It is found in the host membrane. It localises to the host cytoplasm. Its function is as follows. Contributes to the formation of crescents and immature virions (IV). Interacts with phosphatidylinositol-3-phosphate (PI3P) and phosphatidylinositol-4-phosphate (PI4P) lipids in order to form virion membranes. Mechanistically, mediates proper formation of OPG125-hexamers, and hence the honey comb lattice and spherical immature virus. In Bos taurus (Bovine), this protein is Late protein OPG112 (OPG112).